The chain runs to 129 residues: MSNVPAELKYSKEHEWLRKEADGTYTVGITEHAQELLGDMVFVDLPEVGATVSAGDDCAVAESVKAASDIYAPVSGEIVAVNDALSDSPELVNSEPYAGGWIFKIKASDESELESLLDATAYEALLEDE.

In terms of domain architecture, Lipoyl-binding spans 24–106 (TYTVGITEHA…YAGGWIFKIK (83 aa)). The residue at position 65 (Lys-65) is an N6-lipoyllysine.

It belongs to the GcvH family. In terms of assembly, the glycine cleavage system is composed of four proteins: P, T, L and H. (R)-lipoate is required as a cofactor.

Its function is as follows. The glycine cleavage system catalyzes the degradation of glycine. The H protein shuttles the methylamine group of glycine from the P protein to the T protein. The chain is Glycine cleavage system H protein from Escherichia fergusonii (strain ATCC 35469 / DSM 13698 / CCUG 18766 / IAM 14443 / JCM 21226 / LMG 7866 / NBRC 102419 / NCTC 12128 / CDC 0568-73).